Reading from the N-terminus, the 444-residue chain is Platelet-activating factor acetylhydrolase (444 aa).

Positions Met-1–Pro-21 are cleaved as a signal peptide. Asn-60 and Asn-200 each carry an N-linked (GlcNAc...) asparagine glycan. Ser-274 (nucleophile) is an active-site residue. Active-site charge relay system residues include Asp-297 and His-352. Residues Asn-424 and Asn-434 are each glycosylated (N-linked (GlcNAc...) asparagine).

It belongs to the AB hydrolase superfamily. Lipase family. In terms of processing, N-glycosylated. As to expression, plasma.

Its subcellular location is the secreted. The protein localises to the extracellular space. It catalyses the reaction a 1-O-alkyl-2-acetyl-sn-glycero-3-phosphocholine + H2O = a 1-O-alkyl-sn-glycero-3-phosphocholine + acetate + H(+). The catalysed reaction is 1-O-decyl-2-acetyl-sn-glycero-3-phosphocholine + H2O = 1-O-decyl-sn-glycero-3-phosphocholine + acetate + H(+). It carries out the reaction 1-O-dodecyl-2-acetyl-sn-glycero-3-phosphocholine + H2O = 1-O-dodecyl-sn-glycero-3-phosphocholine + acetate + H(+). The enzyme catalyses 1-O-tetradecyl-2-acetyl-sn-glycero-3-phosphocholine + H2O = 1-O-tetradecyl-sn-glycero-3-phosphocholine + acetate + H(+). It catalyses the reaction 1-O-hexadecyl-2-acetyl-sn-glycero-3-phosphocholine + H2O = 1-O-hexadecyl-sn-glycero-3-phosphocholine + acetate + H(+). The catalysed reaction is 1-O-octadecyl-2-acetyl-sn-glycero-3-phosphocholine + H2O = 1-O-octadecyl-sn-glycero-3-phosphocholine + acetate + H(+). It carries out the reaction 1-hexadecanoyl-2-acetyl-sn-glycero-3-phosphocholine + H2O = 1-hexadecanoyl-sn-glycero-3-phosphocholine + acetate + H(+). The enzyme catalyses 1-hexadecanoyl-2-propionyl-sn-glycero-3-phosphocholine + H2O = propanoate + 1-hexadecanoyl-sn-glycero-3-phosphocholine + H(+). It catalyses the reaction 1-hexadecanoyl-2-butanoyl-sn-glycero-3-phosphocholine + H2O = butanoate + 1-hexadecanoyl-sn-glycero-3-phosphocholine + H(+). The catalysed reaction is 1-hexadecanoyl-2-pentanoyl-sn-glycero-3-phosphocholine + H2O = pentanoate + 1-hexadecanoyl-sn-glycero-3-phosphocholine + H(+). It carries out the reaction 1-hexadecanoyl-2-glutaroyl-sn-glycero-3-phosphocholine + H2O = glutarate + 1-hexadecanoyl-sn-glycero-3-phosphocholine + H(+). The enzyme catalyses 1-hexadecanoyl-2-(5-oxopentanoyl)-sn-glycero-3-phosphocholine + H2O = 5-oxopentanoate + 1-hexadecanoyl-sn-glycero-3-phosphocholine + H(+). It catalyses the reaction 1-hexadecanoyl-2-(9-oxononanoyl)-sn-glycero-3-phosphocholine + H2O = 9-oxononanoate + 1-hexadecanoyl-sn-glycero-3-phosphocholine + H(+). The catalysed reaction is 1-hexadecanoyl-2-[9-hydroperoxy-(10E-octadecenoyl)]-sn-glycero-3-phosphocholine + H2O = 9-hydroperoxy-10E-octadecenoate + 1-hexadecanoyl-sn-glycero-3-phosphocholine + H(+). It carries out the reaction 1-hexadecanoyl-2-(10-hydroperoxy-8E-octadecenoyl)-sn-glycero-3-phosphocholine + H2O = 10-hydroperoxy-(8E)-octadecenoate + 1-hexadecanoyl-sn-glycero-3-phosphocholine + H(+). In terms of biological role, lipoprotein-associated calcium-independent phospholipase A2 involved in phospholipid catabolism during inflammatory and oxidative stress response. At the lipid-aqueous interface, hydrolyzes the ester bond of fatty acyl group attached at sn-2 position of phospholipids (phospholipase A2 activity). Specifically targets phospholipids with a short-chain fatty acyl group at sn-2 position. Can hydrolyze phospholipids with long fatty acyl chains, only if they carry oxidized functional groups. Hydrolyzes and inactivates platelet-activating factor (PAF, 1-O-alkyl-2-acetyl-sn-glycero-3-phosphocholine), a potent pro-inflammatory signaling lipid that acts through PTAFR on various innate immune cells. Hydrolyzes oxidatively truncated phospholipids carrying an aldehyde group at omega position, preventing their accumulation in low-density lipoprotein (LDL) particles and uncontrolled pro-inflammatory effects. As part of high-density lipoprotein (HDL) particles, can hydrolyze phospholipids having long-chain fatty acyl hydroperoxides at sn-2 position and protect against potential accumulation of these oxylipins in the vascular wall. Catalyzes the release from membrane phospholipids of F2-isoprostanes, lipid biomarkers of cellular oxidative damage. This chain is Platelet-activating factor acetylhydrolase (PLA2G7), found in Bos taurus (Bovine).